The sequence spans 164 residues: V-type proton ATPase 16 kDa proteolipid subunit (164 aa).

The Lumenal portion of the chain corresponds to 1–9 (MASFSGDET). The chain crosses the membrane as a helical span at residues 10 to 32 (APFFGFLGAAAALVFSCMGAAYG). Residues 33–54 (TAKSGVGVASMGVMRPELVMKS) lie on the Cytoplasmic side of the membrane. The chain crosses the membrane as a helical span at residues 55-75 (IVPVVMAGVLGIYGLIIAVII). The Lumenal portion of the chain corresponds to 76 to 94 (STGINPKAKSYYLFDGYAH). A helical membrane pass occupies residues 95-116 (LSSGLACGLAGLSAGMAIGIVG). Topologically, residues 117-128 (DAGVRANAQQPK) are cytoplasmic. Residues 129–154 (LFVGMILILIFAEALALYGLIVGIIL) form a helical membrane-spanning segment. The Lumenal portion of the chain corresponds to 155–164 (SSRAGQSRAD).

It belongs to the V-ATPase proteolipid subunit family. In terms of assembly, V-ATPase is a heteromultimeric enzyme composed of a peripheral catalytic V1 complex (main components: subunits A, B, C, D, E, and F) attached to an integral membrane V0 proton pore complex (main component: the proteolipid protein; which is present as a hexamer that forms the proton-conducting pore).

It is found in the vacuole membrane. Its function is as follows. Proton-conducting pore forming subunit of the membrane integral V0 complex of vacuolar ATPase. V-ATPase is responsible for acidifying a variety of intracellular compartments in eukaryotic cells. In Vigna radiata var. radiata (Mung bean), this protein is V-type proton ATPase 16 kDa proteolipid subunit.